The chain runs to 495 residues: Ferruginol synthase (495 aa).

Residue M1 is a topological domain, lumenal. The helical transmembrane segment at 2–22 (DSFPLLAALFFIAATITFLSF) threads the bilayer. The Cytoplasmic portion of the chain corresponds to 23-495 (RRRRNLPPGP…PLRIIPIVKS (473 aa)). C437 serves as a coordination point for heme.

The protein belongs to the cytochrome P450 family. Heme serves as cofactor. Expression is more abundant in the rhizome.

The protein localises to the endoplasmic reticulum membrane. The catalysed reaction is abieta-8,11,13-triene + reduced [NADPH--hemoprotein reductase] + O2 = ferruginol + oxidized [NADPH--hemoprotein reductase] + H2O + H(+). In terms of biological role, cytochrome P450 enzyme (CYP) which catalyzes a unique two-electron oxidation cascade on abieta-8,11,13-triene to produce ferruginol, an intermediate in tanshinone biosynthesis. The sequence is that of Ferruginol synthase from Salvia miltiorrhiza (Chinese sage).